A 262-amino-acid chain; its full sequence is RNA polymerase sigma-B factor (262 aa).

The short motif at 58 to 71 (DLRQVGMIGLLGAI) is the Polymerase core binding element. Positions 224 to 243 (QKETGDILGISQMHVSRLQR) form a DNA-binding region, H-T-H motif.

This sequence belongs to the sigma-70 factor family. SigB subfamily. Interacts transiently with the RNAP core.

Functionally, sigma factors are initiation factors that promote the attachment of RNA polymerase (RNAP) to specific initiation sites and are then released. Sigma B is not essential for sporulation; rather it is required for maximal expression of ctc and csbA which are transcribed in the early stationary phase under conditions inimical to sporulation. May play a role in the ability of the bacterium to adapt to various stresses but is not essential for its survival under these conditions. Positively regulates expression of its own operon. The second most abundant sigma factor, it associates with RNAP core under all growth phases. This is RNA polymerase sigma-B factor (sigB) from Bacillus subtilis (strain 168).